A 647-amino-acid polypeptide reads, in one-letter code: Threonine--tRNA ligase (647 aa).

Positions 1–61 (MINITFPDGA…TEDGSIEIVT (61 aa)) constitute a TGS domain. The tract at residues 242–540 (DHRKLGKELD…LIENYKGAFP (299 aa)) is catalytic. Residues cysteine 336, histidine 387, and histidine 517 each contribute to the Zn(2+) site.

Belongs to the class-II aminoacyl-tRNA synthetase family. In terms of assembly, homodimer. It depends on Zn(2+) as a cofactor.

The protein resides in the cytoplasm. It carries out the reaction tRNA(Thr) + L-threonine + ATP = L-threonyl-tRNA(Thr) + AMP + diphosphate + H(+). Catalyzes the attachment of threonine to tRNA(Thr) in a two-step reaction: L-threonine is first activated by ATP to form Thr-AMP and then transferred to the acceptor end of tRNA(Thr). Also edits incorrectly charged L-seryl-tRNA(Thr). This chain is Threonine--tRNA ligase, found in Streptococcus pneumoniae serotype 2 (strain D39 / NCTC 7466).